The sequence spans 252 residues: Metalloprotease LoiP (252 aa).

A signal peptide spans 1–18 (MKIRALLVAMSVATVLTG). A lipid anchor (N-palmitoyl cysteine) is attached at C19. A lipid anchor (S-diacylglycerol cysteine) is attached at C19. C53 and C108 are joined by a disulfide. Residue H130 coordinates Zn(2+). E131 is a catalytic residue. Zn(2+) contacts are provided by H134 and E189. Positions 224-252 (RQSSMFDDHPASAERAQHIRDRMSADGIK) are disordered.

The protein belongs to the peptidase M48B family. In terms of assembly, interacts with Era and BepA. Requires Zn(2+) as cofactor. In terms of processing, the intramolecular disulfide bond improves the stability and the activity of LoiP. It forms even in the absence of the oxido-reductase DsbA.

It is found in the cell outer membrane. Metalloprotease that cleaves substrates preferentially between Phe-Phe residues. Plays a role in response to some stress conditions. Seems to regulate the expression of speB. The sequence is that of Metalloprotease LoiP (loiP) from Escherichia coli (strain K12).